We begin with the raw amino-acid sequence, 52 residues long: Rubredoxin (52 aa).

Residues 1 to 52 (MEKWQCTVCGYIYDPEVGDPTQNIPPGTKFEDLPDDWVCPDCGVGKDQFEKI) enclose the Rubredoxin-like domain. Fe cation-binding residues include Cys6, Cys9, Cys39, and Cys42.

The protein belongs to the rubredoxin family. Fe(3+) serves as cofactor.

Functionally, rubredoxin is a small nonheme, iron protein lacking acid-labile sulfide. Its single Fe, chelated to 4 Cys, functions as an electron acceptor and may also stabilize the conformation of the molecule. The sequence is that of Rubredoxin from Thermoanaerobacterium thermosaccharolyticum (strain ATCC 7956 / DSM 571 / NCIMB 9385 / NCA 3814 / NCTC 13789 / WDCM 00135 / 2032) (Clostridium thermosaccharolyticum).